A 144-amino-acid chain; its full sequence is Large ribosomal subunit protein uL16 (144 aa).

Over residues 1 to 17 (MLQPKKTKFRRQQKGRA) the composition is skewed to basic residues. The disordered stretch occupies residues 1 to 22 (MLQPKKTKFRRQQKGRAKGNAQ).

It belongs to the universal ribosomal protein uL16 family. In terms of assembly, part of the 50S ribosomal subunit.

Binds 23S rRNA and is also seen to make contacts with the A and possibly P site tRNAs. The polypeptide is Large ribosomal subunit protein uL16 (Bacteroides fragilis (strain ATCC 25285 / DSM 2151 / CCUG 4856 / JCM 11019 / LMG 10263 / NCTC 9343 / Onslow / VPI 2553 / EN-2)).